The primary structure comprises 184 residues: Peptide deformylase (184 aa).

C111 and H154 together coordinate Fe cation. E155 is a catalytic residue. A Fe cation-binding site is contributed by H158.

This sequence belongs to the polypeptide deformylase family. Fe(2+) is required as a cofactor.

It carries out the reaction N-terminal N-formyl-L-methionyl-[peptide] + H2O = N-terminal L-methionyl-[peptide] + formate. Removes the formyl group from the N-terminal Met of newly synthesized proteins. Requires at least a dipeptide for an efficient rate of reaction. N-terminal L-methionine is a prerequisite for activity but the enzyme has broad specificity at other positions. In Macrococcus caseolyticus (strain JCSC5402) (Macrococcoides caseolyticum), this protein is Peptide deformylase.